The sequence spans 217 residues: Uracil-DNA glycosylase (217 aa).

Aspartate 62 functions as the Proton acceptor in the catalytic mechanism.

This sequence belongs to the uracil-DNA glycosylase (UDG) superfamily. UNG family.

Its subcellular location is the cytoplasm. The enzyme catalyses Hydrolyzes single-stranded DNA or mismatched double-stranded DNA and polynucleotides, releasing free uracil.. Its function is as follows. Excises uracil residues from the DNA which can arise as a result of misincorporation of dUMP residues by DNA polymerase or due to deamination of cytosine. In Streptococcus pyogenes serotype M3 (strain ATCC BAA-595 / MGAS315), this protein is Uracil-DNA glycosylase.